The following is a 262-amino-acid chain: Malonyl-[acyl-carrier protein] O-methyltransferase (262 aa).

It belongs to the methyltransferase superfamily.

The enzyme catalyses malonyl-[ACP] + S-adenosyl-L-methionine = malonyl-[ACP] methyl ester + S-adenosyl-L-homocysteine. It functions in the pathway cofactor biosynthesis; biotin biosynthesis. In terms of biological role, converts the free carboxyl group of a malonyl-thioester to its methyl ester by transfer of a methyl group from S-adenosyl-L-methionine (SAM). It allows to synthesize pimeloyl-ACP via the fatty acid synthetic pathway. The protein is Malonyl-[acyl-carrier protein] O-methyltransferase of Erwinia pyrifoliae (strain DSM 12163 / CIP 106111 / Ep16/96).